A 219-amino-acid polypeptide reads, in one-letter code: Uridylate kinase (219 aa).

9 to 10 is an ATP binding site; the sequence is GS. Gly41 serves as a coordination point for UMP. Residues Gly42 and Arg46 each contribute to the ATP site. UMP-binding positions include Asp63 and 110 to 116; that span reads TFPGHTT. ATP is bound by residues Thr136, Asn137, Tyr142, and Asp145.

The protein belongs to the UMP kinase family. In terms of assembly, homohexamer.

Its subcellular location is the cytoplasm. It carries out the reaction UMP + ATP = UDP + ADP. It participates in pyrimidine metabolism; CTP biosynthesis via de novo pathway; UDP from UMP (UMPK route): step 1/1. Inhibited by UTP. Functionally, catalyzes the reversible phosphorylation of UMP to UDP. This Archaeoglobus fulgidus (strain ATCC 49558 / DSM 4304 / JCM 9628 / NBRC 100126 / VC-16) protein is Uridylate kinase.